We begin with the raw amino-acid sequence, 69 residues long: Chondroitin proteoglycan 9 (69 aa).

A signal peptide spans 1-19 (MHLWQLVLLVILFFGAAFG). Residues Ser25 and Ser27 are each glycosylated (O-linked (Xyl...) (chondroitin sulfate) serine).

The protein is Chondroitin proteoglycan 9 of Caenorhabditis elegans.